Here is a 665-residue protein sequence, read N- to C-terminus: LisH domain-containing protein ARMC9 (665 aa).

In terms of domain architecture, LisH spans 7-39; sequence HESELLGLVKEYLDFAEFEDTLKTFLKECKIKG. Positions 204-235 form a coiled coil; the sequence is QSNKDVLQQLHQQLVEAERRSMTYLKRYNRIQ. Phosphoserine is present on S582. The segment covering 582-603 has biased composition (acidic residues); sequence SDDDEDEDDEEDHDTMEADLDK. Disordered stretches follow at residues 582-604 and 636-665; these read SDDDEDEDDEEDHDTMEADLDKD and RRGTAGVQWGGPEPLRRPVTPGGHRTGYPA.

As to quaternary structure, interacts with TOGARAM1, CCDC66, CEP104, CSPP1 and CEP290. Interacts with NDUFAF2.

The protein resides in the cytoplasm. It is found in the cytoskeleton. It localises to the cilium basal body. Its subcellular location is the cell projection. The protein localises to the cilium. The protein resides in the microtubule organizing center. It is found in the centrosome. It localises to the centriole. Involved in ciliogenesis. It is required for appropriate acetylation and polyglutamylation of ciliary microtubules, and regulation of cilium length. Acts as a positive regulator of hedgehog (Hh)signaling. May participate in the trafficking and/or retention of GLI2 and GLI3 proteins at the ciliary tip. This Bos taurus (Bovine) protein is LisH domain-containing protein ARMC9 (ARMC9).